A 371-amino-acid chain; its full sequence is Probable dual-specificity RNA methyltransferase RlmN (371 aa).

The Proton acceptor role is filled by glutamate 113. The region spanning 119–352 is the Radical SAM core domain; sequence QSWGNSVCVT…TTVRREMGGE (234 aa). Cysteine 126 and cysteine 357 are joined by a disulfide. Residues cysteine 133, cysteine 137, and cysteine 140 each contribute to the [4Fe-4S] cluster site. S-adenosyl-L-methionine is bound by residues 182 to 183, serine 214, 237 to 239, and asparagine 313; these read GE and SLH. Cysteine 357 acts as the S-methylcysteine intermediate in catalysis.

The protein belongs to the radical SAM superfamily. RlmN family. [4Fe-4S] cluster is required as a cofactor.

It is found in the cytoplasm. It carries out the reaction adenosine(2503) in 23S rRNA + 2 reduced [2Fe-2S]-[ferredoxin] + 2 S-adenosyl-L-methionine = 2-methyladenosine(2503) in 23S rRNA + 5'-deoxyadenosine + L-methionine + 2 oxidized [2Fe-2S]-[ferredoxin] + S-adenosyl-L-homocysteine. The enzyme catalyses adenosine(37) in tRNA + 2 reduced [2Fe-2S]-[ferredoxin] + 2 S-adenosyl-L-methionine = 2-methyladenosine(37) in tRNA + 5'-deoxyadenosine + L-methionine + 2 oxidized [2Fe-2S]-[ferredoxin] + S-adenosyl-L-homocysteine. Its function is as follows. Specifically methylates position 2 of adenine 2503 in 23S rRNA and position 2 of adenine 37 in tRNAs. The chain is Probable dual-specificity RNA methyltransferase RlmN from Symbiobacterium thermophilum (strain DSM 24528 / JCM 14929 / IAM 14863 / T).